The primary structure comprises 377 residues: Nitric oxide reductase FlRd-NAD(+) reductase (377 aa).

It belongs to the FAD-dependent oxidoreductase family. It depends on FAD as a cofactor.

It is found in the cytoplasm. The enzyme catalyses 2 reduced [nitric oxide reductase rubredoxin domain] + NAD(+) + H(+) = 2 oxidized [nitric oxide reductase rubredoxin domain] + NADH. It participates in nitrogen metabolism; nitric oxide reduction. One of at least two accessory proteins for anaerobic nitric oxide (NO) reductase. Reduces the rubredoxin moiety of NO reductase. In Salmonella agona (strain SL483), this protein is Nitric oxide reductase FlRd-NAD(+) reductase.